The sequence spans 208 residues: Cytochrome c oxidase assembly protein CtaG (208 aa).

Topologically, residues 1–19 (MKQRPTGPDTTPRNRRGFG) are cytoplasmic. Residues 20 to 42 (RDTAVASVCGLVVALMVGASYAA) form a helical; Signal-anchor for type II membrane protein membrane-spanning segment. Over 43–208 (VPFYNWFCRV…SEAGPRQGAL (166 aa)) the chain is Periplasmic.

Belongs to the COX11/CtaG family.

The protein localises to the cell inner membrane. Exerts its effect at some terminal stage of cytochrome c oxidase synthesis, probably by being involved in the insertion of the copper B into subunit I. This Rhodopseudomonas palustris (strain BisA53) protein is Cytochrome c oxidase assembly protein CtaG.